Reading from the N-terminus, the 405-residue chain is MKSSKNDTFVYRTWVKTLVVYFVMFVMSAVVPITAMFPNLGYPCYFNALVDYGALNLTNYNLAHHLTPTLYLEPPEMFVYITLVFIADCVAFIYYACGEVALIKARKKVSGLTDLSAWVSAVGSPTVLFLAILKLWSIQVFIQVLSYKHVFLSAFVYFLHFLASVLHACACVTRFSPVWVVKAQDNSIPQDTFLWWVVFYLKPVVTNLYLGCLALETLVFSLSVFLALGNSFYFMVGDMVLGAVNLFLILPIFWYILTEVWLASFLRHNFGFYCGMFIASIILILPLVRYEAVFVSAKLHTTVAINVAIIPILCSVAMLIRICRIFKSMRQGTDYVPVSETVELELESEPRPRPSRTPSPGRNRRRSSTSSSSSRSTRRQRPVSTQALVSSVLPMTTDSEEEIFP.

The Intravirion segment spans residues 1 to 17 (MKSSKNDTFVYRTWVKT). The chain crosses the membrane as a helical span at residues 18 to 38 (LVVYFVMFVMSAVVPITAMFP). Residues 39 to 76 (NLGYPCYFNALVDYGALNLTNYNLAHHLTPTLYLEPPE) lie on the Virion surface side of the membrane. Residues 77 to 97 (MFVYITLVFIADCVAFIYYAC) form a helical membrane-spanning segment. The Intravirion segment spans residues 98–121 (GEVALIKARKKVSGLTDLSAWVSA). A helical transmembrane segment spans residues 122–142 (VGSPTVLFLAILKLWSIQVFI). Residues 143-149 (QVLSYKH) are Virion surface-facing. Residues 150–170 (VFLSAFVYFLHFLASVLHACA) traverse the membrane as a helical segment. Topologically, residues 171–192 (CVTRFSPVWVVKAQDNSIPQDT) are intravirion. Residues 193–215 (FLWWVVFYLKPVVTNLYLGCLAL) traverse the membrane as a helical segment. Residues 216–245 (ETLVFSLSVFLALGNSFYFMVGDMVLGAVN) lie on the Virion surface side of the membrane. Residues 246 to 266 (LFLILPIFWYILTEVWLASFL) traverse the membrane as a helical segment. Arg-267 is a topological domain (intravirion). A helical transmembrane segment spans residues 268-288 (HNFGFYCGMFIASIILILPLV). Topologically, residues 289-299 (RYEAVFVSAKL) are virion surface. A helical transmembrane segment spans residues 300-320 (HTTVAINVAIIPILCSVAMLI). The Intravirion portion of the chain corresponds to 321–405 (RICRIFKSMR…TTDSEEEIFP (85 aa)). The interval 346–405 (LESEPRPRPSRTPSPGRNRRRSSTSSSSSRSTRRQRPVSTQALVSSVLPMTTDSEEEIFP) is disordered. Positions 386-397 (QALVSSVLPMTT) are enriched in polar residues.

The protein belongs to the herpesviridae glycoprotein M family. As to quaternary structure, interacts (via N-terminus) with gN (via N-terminus). The gM-gN heterodimer forms the gCII complex.

Its subcellular location is the virion membrane. The protein resides in the host Golgi apparatus. It localises to the host trans-Golgi network. The protein localises to the host endosome membrane. It is found in the host nucleus inner membrane. Functionally, envelope glycoprotein important for virion assembly and egress. Plays a role in the correct incorporation of gH-gL into virion membrane. Directs the glycoprotein N (gN) to the host trans-Golgi network. The polypeptide is Envelope glycoprotein M (Epstein-Barr virus (strain B95-8) (HHV-4)).